A 60-amino-acid chain; its full sequence is Cytotoxin 6 (60 aa).

4 disulfides stabilise this stretch: Cys-3–Cys-21, Cys-14–Cys-38, Cys-42–Cys-53, and Cys-54–Cys-59.

It belongs to the three-finger toxin family. Short-chain subfamily. Type IA cytotoxin sub-subfamily. Monomer in solution; Homodimer and oligomer in the presence of negatively charged lipids forming a pore with a size ranging between 20 and 30 Angstroms. In terms of tissue distribution, expressed by the venom gland.

It is found in the secreted. It localises to the target cell membrane. Its function is as follows. Shows cytolytic activity on many different cells by forming pore in lipid membranes. In vivo, increases heart rate or kills the animal by cardiac arrest. In addition, it binds to heparin with high affinity, interacts with Kv channel-interacting protein 1 (KCNIP1) in a calcium-independent manner, and binds to integrin alpha-V/beta-3 (ITGAV/ITGB3) with moderate affinity. The chain is Cytotoxin 6 from Naja annulifera (Banded Egyptian cobra).